Reading from the N-terminus, the 814-residue chain is ATP-dependent 6-phosphofructokinase 1 (814 aa).

Residues 1 to 420 (MDADASTITP…NLETYKLLTK (420 aa)) are N-terminal catalytic PFK domain 1. ATP contacts are provided by residues glycine 55, 118–119 (RS), and 148–151 (GDGS). Aspartate 149 contributes to the Mg(2+) binding site. Substrate contacts are provided by residues 194–196 (SID), arginine 231, 238–240 (MGR), glutamate 294, arginine 322, and 328–331 (HVQR). Aspartate 196 serves as the catalytic Proton acceptor. The segment at 421–435 (MRTVEKDNLSEGHKF) is interdomain linker. Positions 436 to 814 (NVAVINVGAP…EEESADSHMF (379 aa)) are C-terminal regulatory PFK domain 2. Beta-D-fructose 2,6-bisphosphate contacts are provided by residues lysine 505, 563–567 (TISNN), arginine 601, 608–610 (MGG), glutamate 664, arginine 690, 696–699 (HVQQ), and arginine 771.

This sequence belongs to the phosphofructokinase type A (PFKA) family. ATP-dependent PFK group I subfamily. Eukaryotic two domain clade 'E' sub-subfamily. As to quaternary structure, homotetramer. The cofactor is Mg(2+).

The protein localises to the cytoplasm. It catalyses the reaction beta-D-fructose 6-phosphate + ATP = beta-D-fructose 1,6-bisphosphate + ADP + H(+). It functions in the pathway carbohydrate degradation; glycolysis; D-glyceraldehyde 3-phosphate and glycerone phosphate from D-glucose: step 3/4. Its activity is regulated as follows. Allosterically activated by ADP, AMP, or fructose 2,6-bisphosphate, and allosterically inhibited by ATP or citrate. Catalyzes the phosphorylation of D-fructose 6-phosphate to fructose 1,6-bisphosphate by ATP, the first committing step of glycolysis. This is ATP-dependent 6-phosphofructokinase 1 from Caenorhabditis elegans.